The sequence spans 497 residues: MSDLNDRLASYIEKVRFLEAQNRKLAADLDLLRGRWGKDTLSVRAMYEGELQEARKLVNDTNRQREELEKEIRKLLDELSEYRRKYEDALRGHQIDRDRIDELLNQLSGLEAEINLLRRRIANIIEEIARIKKENLQFANELTKARSDLDQETLNRIDFQNQVQTLLEEIDFMRRVHDQEIAELQAMASRDTTPENREYFKNELASAIRDIRAEYDQICNVNRMDMESWYKLKVQEIQTQSTRQNLEQNYAKKRLRVQLTDLRGKLADLEGRNSLLKQTQELNYQLEDDQRSYEAALNDRDAQIRKMDEECQALMMLLDTKQTLDAEIAIYRKMLEGEENRAGLRQLVEQVVKTHGLTQVDETESLRVLKGETASRTSFQRSAKGNVSIQETAPDGRYVVLENTHRSKEEAIGEWKLKRKIDGKREIVYTLPRDFILRPGKSVKIWARGQGGIHSPPEQLVFDLEDTFGSGSNVQTILFNREGEERATHIQRSSHTI.

A coil 1A region spans residues Met1–Leu32. One can recognise an IF rod domain in the interval Met1–Ala342. The linker 1 stretch occupies residues Arg33–Met46. The segment at Tyr47–Leu184 is coil 1B. Residues Gln185–Asn202 are linker 12. A coil 2 region spans residues Glu203–Ala342. Positions Gly343–Ile497 are tail. The region spanning Ser375–Ser493 is the LTD domain.

The protein belongs to the intermediate filament family. In terms of assembly, a and B can form homopolymers. Giant body muscle cells.

Its subcellular location is the cytoplasm. In Ascaris suum (Pig roundworm), this protein is Intermediate filament protein A.